A 533-amino-acid polypeptide reads, in one-letter code: Probable protein kinase UbiB (533 aa).

The chain crosses the membrane as a helical span at residues Leu24 to Trp44. A Protein kinase domain is found at Arg126–Gly494. ATP is bound by residues Leu132–Val140 and Lys154. Catalysis depends on Asp289, which acts as the Proton acceptor. A helical transmembrane segment spans residues Leu510 to Ile530.

The protein belongs to the ABC1 family. UbiB subfamily.

The protein localises to the cell inner membrane. It functions in the pathway cofactor biosynthesis; ubiquinone biosynthesis [regulation]. Is probably a protein kinase regulator of UbiI activity which is involved in aerobic coenzyme Q (ubiquinone) biosynthesis. The sequence is that of Probable protein kinase UbiB from Pseudomonas paraeruginosa (strain DSM 24068 / PA7) (Pseudomonas aeruginosa (strain PA7)).